We begin with the raw amino-acid sequence, 423 residues long: Adenylosuccinate synthetase (423 aa).

GTP is bound by residues 11–17 (GDEGKGK) and 39–41 (GHT). The active-site Proton acceptor is the Asp-12. Positions 12 and 39 each coordinate Mg(2+). Residues 12–15 (DEGK), 37–40 (NAGH), Thr-127, Arg-141, Gln-223, Thr-238, and Arg-302 contribute to the IMP site. The Proton donor role is filled by His-40. 298–304 (TTTGRSR) contributes to the substrate binding site. GTP is bound by residues Arg-304, 330–332 (KLD), and 412–414 (SVG).

The protein belongs to the adenylosuccinate synthetase family. As to quaternary structure, homodimer. Mg(2+) serves as cofactor.

It localises to the cytoplasm. The enzyme catalyses IMP + L-aspartate + GTP = N(6)-(1,2-dicarboxyethyl)-AMP + GDP + phosphate + 2 H(+). The protein operates within purine metabolism; AMP biosynthesis via de novo pathway; AMP from IMP: step 1/2. Its function is as follows. Plays an important role in the de novo pathway of purine nucleotide biosynthesis. Catalyzes the first committed step in the biosynthesis of AMP from IMP. This chain is Adenylosuccinate synthetase, found in Methanococcoides burtonii (strain DSM 6242 / NBRC 107633 / OCM 468 / ACE-M).